Consider the following 79-residue polypeptide: Small ribosomal subunit protein bS18 (79 aa).

The protein belongs to the bacterial ribosomal protein bS18 family. In terms of assembly, part of the 30S ribosomal subunit. Forms a tight heterodimer with protein bS6.

In terms of biological role, binds as a heterodimer with protein bS6 to the central domain of the 16S rRNA, where it helps stabilize the platform of the 30S subunit. The protein is Small ribosomal subunit protein bS18 of Nitrobacter winogradskyi (strain ATCC 25391 / DSM 10237 / CIP 104748 / NCIMB 11846 / Nb-255).